The primary structure comprises 424 residues: Histidine--tRNA ligase (424 aa).

The protein belongs to the class-II aminoacyl-tRNA synthetase family. In terms of assembly, homodimer.

It localises to the cytoplasm. It carries out the reaction tRNA(His) + L-histidine + ATP = L-histidyl-tRNA(His) + AMP + diphosphate + H(+). The chain is Histidine--tRNA ligase from Bacillus licheniformis (strain ATCC 14580 / DSM 13 / JCM 2505 / CCUG 7422 / NBRC 12200 / NCIMB 9375 / NCTC 10341 / NRRL NRS-1264 / Gibson 46).